Reading from the N-terminus, the 195-residue chain is Dynactin subunit 6 (195 aa).

This sequence belongs to the dynactin subunits 5/6 family. Dynactin subunit 6 subfamily. As to quaternary structure, member of the pointed-end complex of the dynactin shoulder complex which contains dctn4, dctn5 and dctn6 subunits and Actr10. Within the complex dctn6 forms a heterodimer with dctn5. Interacts with plk1.

The protein resides in the cytoplasm. It is found in the cytoskeleton. It localises to the chromosome. Its subcellular location is the centromere. The protein localises to the kinetochore. Part of the dynactin complex that activates the molecular motor dynein for ultra-processive transport along microtubules. This is Dynactin subunit 6 (dctn6) from Danio rerio (Zebrafish).